The primary structure comprises 963 residues: Importin-13 (963 aa).

20 HEAT repeats span residues 24–54 (ESVE…QAQV), 56–88 (PQAW…KTSR), 95–135 (TDQY…LSMM), 142–179 (AVAD…EFQT), 194–231 (LAVE…SWVQ), 236–268 (LQDC…NAIS), 276–325 (VNTL…ALLD), 330–372 (WQSF…DDIL), 375–438 (EAEK…YEML), 440–476 (AELL…FQSI), 487–522 (VVPG…WLAD), 524–558 (PVMI…CREC), 562–600 (LPPY…LLSA), 603–648 (VEEI…SNLF), 676–716 (PVVV…VKTL), 720–754 (FAPM…VHIF), 761–803 (FPPI…ALKR), 815–845 (VKAV…TELL), 860–893 (EDGR…FALN), and 897–931 (FSLL…QQIL). One can recognise an Importin N-terminal domain in the interval 45 to 111 (AQKWLMQAQV…KAQLFTQITR (67 aa)).

The protein belongs to the importin beta family. In terms of assembly, interacts with UBC9, RAN, RBM8A, eIF-1A and PAX6.

The protein resides in the cytoplasm. It localises to the nucleus. Functions in nuclear protein import as nuclear transport receptor. Serves as receptor for nuclear localization signals (NLS) in cargo substrates. Is thought to mediate docking of the importin/substrate complex to the nuclear pore complex (NPC) through binding to nucleoporin and the complex is subsequently translocated through the pore by an energy requiring, Ran-dependent mechanism. At the nucleoplasmic side of the NPC, Ran binds to the importin, the importin/substrate complex dissociates and importin is re-exported from the nucleus to the cytoplasm where GTP hydrolysis releases Ran. The directionality of nuclear import is thought to be conferred by an asymmetric distribution of the GTP- and GDP-bound forms of Ran between the cytoplasm and nucleus. Mediates the nuclear import of UBC9, the RBM8A/MAGOH complex, PAX6 and probably other members of the paired homeobox family. Also mediates nuclear export of eIF-1A, and the cytoplasmic release of eIF-1A is triggered by the loading of import substrates onto IPO13. This is Importin-13 (IPO13) from Pongo abelii (Sumatran orangutan).